The sequence spans 266 residues: Trypsin 5G1 (266 aa).

Positions 1 to 18 are cleaved as a signal peptide; the sequence is MTRIILILTATFFACALG. The propeptide at 19 to 39 is activation peptide; the sequence is ASTGGSHPLRPWWNALRSSGR. Residues 40–265 enclose the Peptidase S1 domain; it reads IVGGFEVPVE…VRDWVKEVSG (226 aa). Cysteines 66 and 82 form a disulfide. Catalysis depends on charge relay system residues His81 and Asp125. 2 disulfides stabilise this stretch: Cys190/Cys206 and Cys217/Cys241. Residue Ser221 is the Charge relay system of the active site.

It belongs to the peptidase S1 family. Midgut.

It is found in the secreted. The protein localises to the extracellular space. It catalyses the reaction Preferential cleavage: Arg-|-Xaa, Lys-|-Xaa.. Functionally, major function may be to aid in digestion of the blood meal. The polypeptide is Trypsin 5G1 (Aedes aegypti (Yellowfever mosquito)).